The primary structure comprises 348 residues: RNA 3'-terminal phosphate cyclase (348 aa).

ATP contacts are provided by residues Q107 and 290 to 294 (HLADQ). H316 acts as the Tele-AMP-histidine intermediate in catalysis.

Belongs to the RNA 3'-terminal cyclase family. Type 1 subfamily.

The protein resides in the cytoplasm. It carries out the reaction a 3'-end 3'-phospho-ribonucleotide-RNA + ATP = a 3'-end 2',3'-cyclophospho-ribonucleotide-RNA + AMP + diphosphate. Its function is as follows. Catalyzes the conversion of 3'-phosphate to a 2',3'-cyclic phosphodiester at the end of RNA. The mechanism of action of the enzyme occurs in 3 steps: (A) adenylation of the enzyme by ATP; (B) transfer of adenylate to an RNA-N3'P to produce RNA-N3'PP5'A; (C) and attack of the adjacent 2'-hydroxyl on the 3'-phosphorus in the diester linkage to produce the cyclic end product. The biological role of this enzyme is unknown but it is likely to function in some aspects of cellular RNA processing. The chain is RNA 3'-terminal phosphate cyclase (rtcA) from Nostoc sp. (strain PCC 7120 / SAG 25.82 / UTEX 2576).